Here is a 99-residue protein sequence, read N- to C-terminus: MMNMQSMMKQAQKLQKQMEKGQAELAATEFTGKSAQDLVVAKLTGDKKVVSIDFNPAVVDPEDLETLSEMTAQALNHALAQIDDATQKKMGAFAGKLPF.

Over residues 1-15 the composition is skewed to low complexity; it reads MMNMQSMMKQAQKLQ. Residues 1-23 are disordered; it reads MMNMQSMMKQAQKLQKQMEKGQA.

The protein belongs to the YbaB/EbfC family. In terms of assembly, homodimer.

Its subcellular location is the cytoplasm. It localises to the nucleoid. In terms of biological role, binds to DNA and alters its conformation. May be involved in regulation of gene expression, nucleoid organization and DNA protection. The polypeptide is Nucleoid-associated protein SSA_0326 (Streptococcus sanguinis (strain SK36)).